Consider the following 248-residue polypeptide: 2,3-bisphosphoglycerate-dependent phosphoglycerate mutase (248 aa).

Substrate-binding positions include 7 to 14 (RHGESIWN), 20 to 21 (TG), Arg59, 86 to 89 (ERHY), Lys97, 113 to 114 (RR), and 182 to 183 (GN). His8 (tele-phosphohistidine intermediate) is an active-site residue. Glu86 (proton donor/acceptor) is an active-site residue.

This sequence belongs to the phosphoglycerate mutase family. BPG-dependent PGAM subfamily.

It catalyses the reaction (2R)-2-phosphoglycerate = (2R)-3-phosphoglycerate. The protein operates within carbohydrate degradation; glycolysis; pyruvate from D-glyceraldehyde 3-phosphate: step 3/5. Functionally, catalyzes the interconversion of 2-phosphoglycerate and 3-phosphoglycerate. The chain is 2,3-bisphosphoglycerate-dependent phosphoglycerate mutase from Methylacidiphilum infernorum (isolate V4) (Methylokorus infernorum (strain V4)).